A 190-amino-acid polypeptide reads, in one-letter code: Peptide deformylase (190 aa).

Residues Cys-94 and His-136 each coordinate Fe cation. The active site involves Glu-137. His-140 contributes to the Fe cation binding site.

Belongs to the polypeptide deformylase family. Fe(2+) is required as a cofactor.

It carries out the reaction N-terminal N-formyl-L-methionyl-[peptide] + H2O = N-terminal L-methionyl-[peptide] + formate. Functionally, removes the formyl group from the N-terminal Met of newly synthesized proteins. Requires at least a dipeptide for an efficient rate of reaction. N-terminal L-methionine is a prerequisite for activity but the enzyme has broad specificity at other positions. This is Peptide deformylase from Chlorobium luteolum (strain DSM 273 / BCRC 81028 / 2530) (Pelodictyon luteolum).